The sequence spans 254 residues: 3-deoxy-manno-octulosonate cytidylyltransferase (254 aa).

It belongs to the KdsB family.

The protein resides in the cytoplasm. The enzyme catalyses 3-deoxy-alpha-D-manno-oct-2-ulosonate + CTP = CMP-3-deoxy-beta-D-manno-octulosonate + diphosphate. The protein operates within nucleotide-sugar biosynthesis; CMP-3-deoxy-D-manno-octulosonate biosynthesis; CMP-3-deoxy-D-manno-octulosonate from 3-deoxy-D-manno-octulosonate and CTP: step 1/1. Its pathway is bacterial outer membrane biogenesis; lipopolysaccharide biosynthesis. In terms of biological role, activates KDO (a required 8-carbon sugar) for incorporation into bacterial lipopolysaccharide in Gram-negative bacteria. The protein is 3-deoxy-manno-octulosonate cytidylyltransferase of Bordetella bronchiseptica (strain ATCC BAA-588 / NCTC 13252 / RB50) (Alcaligenes bronchisepticus).